We begin with the raw amino-acid sequence, 582 residues long: ATP-dependent lipid A-core flippase (582 aa).

5 helical membrane passes run 15–35, 68–88, 140–160, 161–181, and 254–274; these read LWPIISPFKLGLVVSGIALVI, YVVVLVIFLRGISNFISSYCL, GALITIVREGAYIISLLAVML, YTSWQLSIVLFLIGPIIAVLI, and VQIIASFALAAVLYLATVPTI. The ABC transmembrane type-1 domain maps to 27 to 310; sequence VVSGIALVIN…LTNVNAQFQK (284 aa). The region spanning 342–578 is the ABC transporter domain; sequence LSFKNVTFTY…NGAYKQLHHI (237 aa). Residue 376-383 coordinates ATP; sequence GRSGSGKS.

This sequence belongs to the ABC transporter superfamily. Lipid exporter (TC 3.A.1.106) family. In terms of assembly, homodimer.

It localises to the cell inner membrane. The catalysed reaction is ATP + H2O + lipid A-core oligosaccharideSide 1 = ADP + phosphate + lipid A-core oligosaccharideSide 2.. Involved in lipopolysaccharide (LPS) biosynthesis. Translocates lipid A-core from the inner to the outer leaflet of the inner membrane. Transmembrane domains (TMD) form a pore in the inner membrane and the ATP-binding domain (NBD) is responsible for energy generation. The sequence is that of ATP-dependent lipid A-core flippase from Pasteurella multocida (strain Pm70).